Reading from the N-terminus, the 447-residue chain is Cysteine--tRNA ligase (447 aa).

Cys-28 lines the Zn(2+) pocket. Residues 30–40 (PTVYNYIHIGN) carry the 'HIGH' region motif. Zn(2+) is bound by residues Cys-211, His-236, and Glu-240. The 'KMSKS' region motif lies at 268–272 (KMSKS). Lys-271 provides a ligand contact to ATP.

This sequence belongs to the class-I aminoacyl-tRNA synthetase family. Monomer. It depends on Zn(2+) as a cofactor.

It is found in the cytoplasm. It catalyses the reaction tRNA(Cys) + L-cysteine + ATP = L-cysteinyl-tRNA(Cys) + AMP + diphosphate. The sequence is that of Cysteine--tRNA ligase from Streptococcus pyogenes serotype M6 (strain ATCC BAA-946 / MGAS10394).